We begin with the raw amino-acid sequence, 143 residues long: Transcriptional regulator MraZ (143 aa).

SpoVT-AbrB domains lie at 5-47 (TYTP…PKEE) and 76-119 (TDEQ…DKQA).

It belongs to the MraZ family. Forms oligomers.

Its subcellular location is the cytoplasm. The protein resides in the nucleoid. The protein is Transcriptional regulator MraZ of Nocardia farcinica (strain IFM 10152).